A 222-amino-acid chain; its full sequence is N-(5'-phosphoribosyl)anthranilate isomerase (222 aa).

The protein belongs to the TrpF family.

The enzyme catalyses N-(5-phospho-beta-D-ribosyl)anthranilate = 1-(2-carboxyphenylamino)-1-deoxy-D-ribulose 5-phosphate. Its pathway is amino-acid biosynthesis; L-tryptophan biosynthesis; L-tryptophan from chorismate: step 3/5. The polypeptide is N-(5'-phosphoribosyl)anthranilate isomerase (Symbiobacterium thermophilum (strain DSM 24528 / JCM 14929 / IAM 14863 / T)).